A 436-amino-acid chain; its full sequence is GTPase Der (436 aa).

EngA-type G domains lie at 4-167 and 175-351; these read PTIA…PNEY and IKFS…ESQN. GTP is bound by residues 10–17, 57–61, 119–122, 181–188, 229–233, and 294–297; these read GRPNVGKS, DTGGI, NKVD, DTAGM, and NKWD. Residues 352–436 form the KH-like domain; that stretch reads TRIPSAVLND…PIHLIARKRK (85 aa).

This sequence belongs to the TRAFAC class TrmE-Era-EngA-EngB-Septin-like GTPase superfamily. EngA (Der) GTPase family. In terms of assembly, associates with the 50S ribosomal subunit.

GTPase that plays an essential role in the late steps of ribosome biogenesis. The polypeptide is GTPase Der (Streptococcus pneumoniae (strain JJA)).